A 349-amino-acid chain; its full sequence is tRNA uridine(34) hydroxylase (349 aa).

Residues D146 to L240 form the Rhodanese domain. C200 acts as the Cysteine persulfide intermediate in catalysis. Over residues P314 to G328 the composition is skewed to basic and acidic residues. The disordered stretch occupies residues P314–E349.

Belongs to the TrhO family.

The enzyme catalyses uridine(34) in tRNA + AH2 + O2 = 5-hydroxyuridine(34) in tRNA + A + H2O. Its function is as follows. Catalyzes oxygen-dependent 5-hydroxyuridine (ho5U) modification at position 34 in tRNAs. This Cronobacter sakazakii (strain ATCC BAA-894) (Enterobacter sakazakii) protein is tRNA uridine(34) hydroxylase.